The chain runs to 351 residues: DNA polymerase IV (351 aa).

In terms of domain architecture, UmuC spans 4 to 185 (IIHVDMDCFF…LPLAKIPGVG (182 aa)). The Mg(2+) site is built by D8 and D103. The active site involves E104.

Belongs to the DNA polymerase type-Y family. In terms of assembly, monomer. The cofactor is Mg(2+).

It localises to the cytoplasm. It carries out the reaction DNA(n) + a 2'-deoxyribonucleoside 5'-triphosphate = DNA(n+1) + diphosphate. Its function is as follows. Poorly processive, error-prone DNA polymerase involved in untargeted mutagenesis. Copies undamaged DNA at stalled replication forks, which arise in vivo from mismatched or misaligned primer ends. These misaligned primers can be extended by PolIV. Exhibits no 3'-5' exonuclease (proofreading) activity. May be involved in translesional synthesis, in conjunction with the beta clamp from PolIII. This Escherichia coli O9:H4 (strain HS) protein is DNA polymerase IV.